A 130-amino-acid chain; its full sequence is uncharacterized protein (130 aa).

The tract at residues 1 to 34 is disordered; it reads MTAVGGSPPTRRCPATEDRAPATVATPSSTDPTA.

The protein to M.tuberculosis Rv1583c.

This is an uncharacterized protein from Mycobacterium tuberculosis (strain CDC 1551 / Oshkosh).